The sequence spans 180 residues: Large ribosomal subunit protein uL6 (180 aa).

It belongs to the universal ribosomal protein uL6 family. Part of the 50S ribosomal subunit.

This protein binds to the 23S rRNA, and is important in its secondary structure. It is located near the subunit interface in the base of the L7/L12 stalk, and near the tRNA binding site of the peptidyltransferase center. The protein is Large ribosomal subunit protein uL6 of Borrelia hermsii (strain HS1 / DAH).